Here is a 327-residue protein sequence, read N- to C-terminus: MNKLTFHNNKVMQDRRRVCIFLPNDKSVSIIINVKILCHQLLVQVCDLLRLKDSHLFGLSVIQNNEHVYMELSQKLYKYCPKEWKKEASKGIDQFGPPMIIHFRVQYYVENGKLISDRIARYYYYWHLRKQVLHSQCVLREEAYFLLAAFALQADLGNFKRKVHHGDYFEPEAYFPAWVVSKRGKDYILKHIPNMHRDQFALTASEAYLKYIKEAVRLDDVAIHYYRLYKDKREVEGSLTLGLTMRGIQIFQNLEEEKQLLYDFPWTNVGKLVFVGKKFEILPDGLPSARKLVYYTGCPTRSRHLLQLLSNSHRLYMNLQPVLRHLR.

Positions 16–320 constitute an FERM domain; the sequence is RRVCIFLPND…NSHRLYMNLQ (305 aa).

It is found in the cytoplasm. Its subcellular location is the cell membrane. The chain is FERM domain-containing protein 6 (Frmd6) from Rattus norvegicus (Rat).